The following is a 567-amino-acid chain: uncharacterized protein (567 aa).

12 consecutive transmembrane segments (helical) span residues 136–156 (LFCL…LIFA), 159–179 (FMGI…SDII), 193–213 (LLLG…SEVF), 217–237 (LCFL…FFFV), 258–278 (ILGG…LTFG), 291–311 (LLLL…SITE), 334–354 (FLIG…FQLV), 364–384 (LRLA…GILM), 393–415 (LLFS…HPGI), 426–446 (PANV…IFAF), 457–477 (TLYL…SAVI), and 536–553 (AQQF…LCIL).

The protein belongs to the major facilitator superfamily.

The protein resides in the membrane. This is an uncharacterized protein from Schizosaccharomyces pombe (strain 972 / ATCC 24843) (Fission yeast).